We begin with the raw amino-acid sequence, 210 residues long: GRF1-interacting factor 1 (210 aa).

Positions 135-152 are enriched in low complexity; that stretch reads ATLQHQQLHHSQLGMSSS. Residues 135 to 210 form a disordered region; it reads ATLQHQQLHH…LYLKSSDDGN (76 aa). A compositionally biased stretch (gly residues) spans 182-198; the sequence is GSGGGGEGRGGSSGDGG.

The protein belongs to the SS18 family. Interacts with GRF1, GRF2, GRF5 and GRF9. Strongly expressed in actively growing and developing tissues, such as roots, upper stems, and shoot tips and flower buds. Also expressed in mature flowers. Not expressed in the shoot apical meristem (SAM). Highly accumulated in the proximal part of leaf primordia, in the key proliferative zone at the junction region between the leaf blade and leaf petiole.

In terms of biological role, transcription coactivator that plays a role in the regulation of cell expansion in leaf and cotyledons tissues. Component of a network formed by miR396, the GRFs and their interacting factors (GIFs) acting in the regulation of meristem function, at least partially through the control of cell proliferation. Appears to function synergistically with GRF1 as a transcriptional coactivator. Acts together with GRF5 for the development of appropriate leaf size and shape through the promotion and/or maintenance of cell proliferation activity in leaf primordia. Plays a role in adaxial/abaxial patterning and growth in leaf morphogenesis. GIFs are involved in the positive regulation of cell proliferation of lateral organs in a functionally redundant manner. Together with GATA18/HAN, mediates cotyledon identity by preventing ectopic root formation through the repression of PLT1 expression. In Arabidopsis thaliana (Mouse-ear cress), this protein is GRF1-interacting factor 1.